A 242-amino-acid polypeptide reads, in one-letter code: 4-hydroxy-tetrahydrodipicolinate reductase (242 aa).

NAD(+)-binding positions include 8-13 (GAKGRM), 75-77 (GTT), and 99-102 (ATNM). The active-site Proton donor/acceptor is the His-131. His-132 serves as a coordination point for (S)-2,3,4,5-tetrahydrodipicolinate. Residue Lys-135 is the Proton donor of the active site. 141–142 (GT) contacts (S)-2,3,4,5-tetrahydrodipicolinate.

This sequence belongs to the DapB family.

The protein resides in the cytoplasm. It catalyses the reaction (S)-2,3,4,5-tetrahydrodipicolinate + NAD(+) + H2O = (2S,4S)-4-hydroxy-2,3,4,5-tetrahydrodipicolinate + NADH + H(+). It carries out the reaction (S)-2,3,4,5-tetrahydrodipicolinate + NADP(+) + H2O = (2S,4S)-4-hydroxy-2,3,4,5-tetrahydrodipicolinate + NADPH + H(+). It participates in amino-acid biosynthesis; L-lysine biosynthesis via DAP pathway; (S)-tetrahydrodipicolinate from L-aspartate: step 4/4. Its function is as follows. Catalyzes the conversion of 4-hydroxy-tetrahydrodipicolinate (HTPA) to tetrahydrodipicolinate. This is 4-hydroxy-tetrahydrodipicolinate reductase from Campylobacter jejuni subsp. jejuni serotype O:2 (strain ATCC 700819 / NCTC 11168).